Reading from the N-terminus, the 461-residue chain is Steroidogenic factor 1 (461 aa).

Positions 10–85 form a DNA-binding region, nuclear receptor; that stretch reads DELCPVCGDK…VGMRLEAVRA (76 aa). The segment at 13-33 adopts an NR C4-type zinc-finger fold; the sequence is CPVCGDKVSGYHYGLLTCESC. N6-acetyllysine is present on residues Lys34, Lys38, and Lys72. The NR C4-type zinc finger occupies 49 to 73; that stretch reads CTESQSCKIDKTQRKRCPFCRFQKC. Residues 116–158 form a disordered region; that stretch reads NGFKLETGPPVGVPPPPPPPPDYMLPHGLHASEPKGLASGPPA. Residue Lys119 forms a Glycyl lysine isopeptide (Lys-Gly) (interchain with G-Cter in SUMO) linkage. The segment covering 126–138 has biased composition (pro residues); it reads VGVPPPPPPPPDY. Lys194 participates in a covalent cross-link: Glycyl lysine isopeptide (Lys-Gly) (interchain with G-Cter in SUMO). Ser203 is modified (phosphoserine; by CDK7). Residues 222-459 enclose the NR LBD domain; that stretch reads GVPELILQLL…NLLIEMLQAK (238 aa). Residues 230–461 are important for dimerization; sequence LLQLEPDEDQ…LIEMLQAKQT (232 aa). Residues Gly341, Tyr436, and Lys440 each contribute to the a 1,2-diacyl-sn-glycero-3-phosphocholine site.

This sequence belongs to the nuclear hormone receptor family. NR5 subfamily. As to quaternary structure, binds DNA as a monomer. Part of a complex consisting of SFPQ, NONO and NR5A1. Interacts with NR0B2. Interacts with DGKQ and CDK7. Binds to and activated by HIPK3. May be regulated by phosphorylation and dephosphorylation. Post-translationally, acetylation stimulates the transcriptional activity. In terms of processing, sumoylation reduces CDK7-mediated phosphorylation on Ser-203. Phosphorylated on Ser-203 by CDK7. This phosphorylation promotes transcriptional activity. In terms of tissue distribution, adrenal, ovary, testis, placenta, adipocyte, and brain.

The protein resides in the nucleus. Its function is as follows. Transcriptional activator. Seems to be essential for sexual differentiation and formation of the primary steroidogenic tissues. Binds to the Ad4 site found in the promoter region of steroidogenic P450 genes such as CYP11A, CYP11B and CYP21B. Also regulates the AMH/Muellerian inhibiting substance gene as well as the AHCH and STAR genes. 5'-YCAAGGYC-3' and 5'-RRAGGTCA-3' are the consensus sequences for the recognition by NR5A1. The SFPQ-NONO-NR5A1 complex binds to the CYP17 promoter and regulates basal and cAMP-dependent transcriptional activity. Binds phospholipids with a phosphatidylinositol (PI) headgroup, in particular PI(3,4)P2 and PI(3,4,5)P3. Activated by the phosphorylation of NR5A1 by HIPK3 leading to increased steroidogenic gene expression upon cAMP signaling pathway stimulation. This chain is Steroidogenic factor 1 (NR5A1), found in Bos taurus (Bovine).